We begin with the raw amino-acid sequence, 238 residues long: Small ribosomal subunit protein uS3 (238 aa).

A KH type-2 domain is found at 39-107 (MREFIHDYAK…ELHLNIVEIR (69 aa)). Residues 212–222 (PQAHDRRHSEA) are compositionally biased toward basic and acidic residues. The interval 212-238 (PQAHDRRHSEAQEGAAPRPPRRDRERA) is disordered.

The protein belongs to the universal ribosomal protein uS3 family. As to quaternary structure, part of the 30S ribosomal subunit. Forms a tight complex with proteins S10 and S14.

Binds the lower part of the 30S subunit head. Binds mRNA in the 70S ribosome, positioning it for translation. This is Small ribosomal subunit protein uS3 from Cereibacter sphaeroides (strain ATCC 17029 / ATH 2.4.9) (Rhodobacter sphaeroides).